We begin with the raw amino-acid sequence, 666 residues long: Translation factor guf1, mitochondrial (666 aa).

The N-terminal 43 residues, 1–43 (MRGCLQLARWLRAAPKCPAASLLKPPSGLANPARFFTTSTACW), are a transit peptide targeting the mitochondrion. Residues 68 to 248 (DRYRNFCIVA…TVVEKIPAPV (181 aa)) form the tr-type G domain. GTP is bound by residues 77–84 (AHVDHGKS), 141–145 (DTPGH), and 195–198 (NKVD).

The protein belongs to the TRAFAC class translation factor GTPase superfamily. Classic translation factor GTPase family. LepA subfamily.

The protein localises to the mitochondrion inner membrane. It carries out the reaction GTP + H2O = GDP + phosphate + H(+). Its function is as follows. Promotes mitochondrial protein synthesis. May act as a fidelity factor of the translation reaction, by catalyzing a one-codon backward translocation of tRNAs on improperly translocated ribosomes. Binds to mitochondrial ribosomes in a GTP-dependent manner. This chain is Translation factor guf1, mitochondrial (guf1), found in Aspergillus niger (strain ATCC MYA-4892 / CBS 513.88 / FGSC A1513).